The primary structure comprises 420 residues: Glutamate dehydrogenase (420 aa).

Residue lysine 105 is part of the active site. 220–226 is a binding site for NAD(+); the sequence is GYGNAGY.

The protein belongs to the Glu/Leu/Phe/Val dehydrogenases family. Homohexamer.

It localises to the cytoplasm. It carries out the reaction L-glutamate + NAD(+) + H2O = 2-oxoglutarate + NH4(+) + NADH + H(+). It catalyses the reaction L-glutamate + NADP(+) + H2O = 2-oxoglutarate + NH4(+) + NADPH + H(+). This chain is Glutamate dehydrogenase (gdhA), found in Pyrococcus horikoshii (strain ATCC 700860 / DSM 12428 / JCM 9974 / NBRC 100139 / OT-3).